Here is a 145-residue protein sequence, read N- to C-terminus: MNKMERQQQIKRIIQAEHIGTQEDIKNHLQKEGIVVTQATLSRDLREIGLLKLRDEQGKLYYSLSEHVATPFSPEVRFYVLKVDRAGFMLVLHTNLGEADVLANLIDNDAIEDILGTIAGADTLLVICRDEEIAKRFEKDLAAGL.

Belongs to the ArgR family.

The protein localises to the cytoplasm. The protein operates within amino-acid biosynthesis; L-arginine biosynthesis [regulation]. In terms of biological role, regulates arginine biosynthesis genes. The sequence is that of Arginine repressor from Streptococcus pyogenes serotype M6 (strain ATCC BAA-946 / MGAS10394).